Reading from the N-terminus, the 481-residue chain is Argininosuccinate lyase (481 aa).

The protein belongs to the lyase 1 family. Argininosuccinate lyase subfamily.

Its subcellular location is the cytoplasm. The catalysed reaction is 2-(N(omega)-L-arginino)succinate = fumarate + L-arginine. It participates in amino-acid biosynthesis; L-arginine biosynthesis; L-arginine from L-ornithine and carbamoyl phosphate: step 3/3. The chain is Argininosuccinate lyase from Kineococcus radiotolerans (strain ATCC BAA-149 / DSM 14245 / SRS30216).